Here is a 173-residue protein sequence, read N- to C-terminus: Crossover junction endodeoxyribonuclease RuvC (173 aa).

Catalysis depends on residues aspartate 8, glutamate 69, and aspartate 141. Positions 8, 69, and 141 each coordinate Mg(2+).

This sequence belongs to the RuvC family. Homodimer which binds Holliday junction (HJ) DNA. The HJ becomes 2-fold symmetrical on binding to RuvC with unstacked arms; it has a different conformation from HJ DNA in complex with RuvA. In the full resolvosome a probable DNA-RuvA(4)-RuvB(12)-RuvC(2) complex forms which resolves the HJ. It depends on Mg(2+) as a cofactor.

Its subcellular location is the cytoplasm. The catalysed reaction is Endonucleolytic cleavage at a junction such as a reciprocal single-stranded crossover between two homologous DNA duplexes (Holliday junction).. In terms of biological role, the RuvA-RuvB-RuvC complex processes Holliday junction (HJ) DNA during genetic recombination and DNA repair. Endonuclease that resolves HJ intermediates. Cleaves cruciform DNA by making single-stranded nicks across the HJ at symmetrical positions within the homologous arms, yielding a 5'-phosphate and a 3'-hydroxyl group; requires a central core of homology in the junction. The consensus cleavage sequence is 5'-(A/T)TT(C/G)-3'. Cleavage occurs on the 3'-side of the TT dinucleotide at the point of strand exchange. HJ branch migration catalyzed by RuvA-RuvB allows RuvC to scan DNA until it finds its consensus sequence, where it cleaves and resolves the cruciform DNA. The polypeptide is Crossover junction endodeoxyribonuclease RuvC (Xylella fastidiosa (strain Temecula1 / ATCC 700964)).